A 346-amino-acid polypeptide reads, in one-letter code: Ribonucleoside-diphosphate reductase subunit beta (346 aa).

Residues glutamate 89, glutamate 120, and histidine 123 each coordinate Fe cation. Tyrosine 129 is a catalytic residue. Fe cation contacts are provided by glutamate 193, glutamate 227, and histidine 230.

Belongs to the ribonucleoside diphosphate reductase small chain family. As to quaternary structure, tetramer of two alpha and two beta subunits. Fe cation is required as a cofactor.

It carries out the reaction a 2'-deoxyribonucleoside 5'-diphosphate + [thioredoxin]-disulfide + H2O = a ribonucleoside 5'-diphosphate + [thioredoxin]-dithiol. In terms of biological role, provides the precursors necessary for DNA synthesis. Catalyzes the biosynthesis of deoxyribonucleotides from the corresponding ribonucleotides. This chain is Ribonucleoside-diphosphate reductase subunit beta (nrdB), found in Chlamydia pneumoniae (Chlamydophila pneumoniae).